Consider the following 317-residue polypeptide: Acetyl-coenzyme A carboxylase carboxyl transferase subunit alpha (317 aa).

Residues 33 to 294 (NLDDEITRLQ…KKRLLADLAD (262 aa)) enclose the CoA carboxyltransferase C-terminal domain.

The protein belongs to the AccA family. In terms of assembly, acetyl-CoA carboxylase is a heterohexamer composed of biotin carboxyl carrier protein (AccB), biotin carboxylase (AccC) and two subunits each of ACCase subunit alpha (AccA) and ACCase subunit beta (AccD).

It is found in the cytoplasm. It catalyses the reaction N(6)-carboxybiotinyl-L-lysyl-[protein] + acetyl-CoA = N(6)-biotinyl-L-lysyl-[protein] + malonyl-CoA. Its pathway is lipid metabolism; malonyl-CoA biosynthesis; malonyl-CoA from acetyl-CoA: step 1/1. Functionally, component of the acetyl coenzyme A carboxylase (ACC) complex. First, biotin carboxylase catalyzes the carboxylation of biotin on its carrier protein (BCCP) and then the CO(2) group is transferred by the carboxyltransferase to acetyl-CoA to form malonyl-CoA. This is Acetyl-coenzyme A carboxylase carboxyl transferase subunit alpha from Histophilus somni (strain 129Pt) (Haemophilus somnus).